A 393-amino-acid polypeptide reads, in one-letter code: Chalcone synthase LF2 (393 aa).

Cys-164 is an active-site residue.

The protein belongs to the thiolase-like superfamily. Chalcone/stilbene synthases family.

It carries out the reaction (E)-4-coumaroyl-CoA + 3 malonyl-CoA + 3 H(+) = 2',4,4',6'-tetrahydroxychalcone + 3 CO2 + 4 CoA. It functions in the pathway secondary metabolite biosynthesis; flavonoid biosynthesis. Functionally, the primary product of this enzyme is 4,2',4',6'-tetrahydroxychalcone (also termed naringenin-chalcone or chalcone) which can under specific conditions spontaneously isomerize into naringenin. The polypeptide is Chalcone synthase LF2 (CHS-LF2) (Ipomoea batatas (Sweet potato)).